The primary structure comprises 355 residues: 3-isopropylmalate dehydrogenase (355 aa).

Residues Arg90, Arg100, Arg128, and Asp222 each coordinate substrate. Residues Asp222, Asp246, and Asp250 each contribute to the Mg(2+) site. Residue 280 to 292 (GSAPDIAGKGVAN) coordinates NAD(+).

This sequence belongs to the isocitrate and isopropylmalate dehydrogenases family. LeuB type 1 subfamily. In terms of assembly, homodimer. Mg(2+) is required as a cofactor. Requires Mn(2+) as cofactor.

It is found in the cytoplasm. The enzyme catalyses (2R,3S)-3-isopropylmalate + NAD(+) = 4-methyl-2-oxopentanoate + CO2 + NADH. The protein operates within amino-acid biosynthesis; L-leucine biosynthesis; L-leucine from 3-methyl-2-oxobutanoate: step 3/4. In terms of biological role, catalyzes the oxidation of 3-carboxy-2-hydroxy-4-methylpentanoate (3-isopropylmalate) to 3-carboxy-4-methyl-2-oxopentanoate. The product decarboxylates to 4-methyl-2 oxopentanoate. The chain is 3-isopropylmalate dehydrogenase from Cupriavidus pinatubonensis (strain JMP 134 / LMG 1197) (Cupriavidus necator (strain JMP 134)).